Here is a 304-residue protein sequence, read N- to C-terminus: MLSRGKRLGYAAYERLLQWELSGTPDHVAVIMDGNRRYAEKQGTKKQEGHKEGAQTTEALLNWCDELGIREVTLYTFSTENFDRDPEEREHIFDLVEQKLRTFADADRVHEAGVCIRAIGETEMLPERVRDAIDYAEGRTAQYDQLNLNIALAYGGRAELLGAARDVAAAVENETLDPTDVSAETIEERLYEGPTRDVDLIVRTGGDERTSNFLPWHANGNEAATFFCTPYWPEFRKVDFLRAIRTYQNREDSWRTTRAERSLALVRAIEQSELPTAKRMLGRFRDALPSTEREQLDEEYDLAD.

D33 is an active-site residue. D33 serves as a coordination point for Mg(2+). Substrate is bound by residues 34–37 (GNRR), K46, H50, and 78–80 (STE). Catalysis depends on N81, which acts as the Proton acceptor. Substrate is bound by residues F82, R84, R203, and 209-211 (RTS).

The protein belongs to the UPP synthase family. In terms of assembly, homodimer. Mg(2+) serves as cofactor.

It catalyses the reaction geranylgeranyl diphosphate + 7 isopentenyl diphosphate = tri-trans,hepta-cis-undecaprenyl diphosphate + 7 diphosphate. In terms of biological role, catalyzes the sequential condensation of isopentenyl diphosphate (IPP) with geranylgeranyl diphosphate (GGPP) to yield (2Z,6Z,10Z,14Z,18Z,22Z,26Z,30E,34E,38E)-undecaprenyl diphosphate (tritrans,heptacis-UPP). It is probably the precursor of glycosyl carrier lipids. This Haloarcula marismortui (strain ATCC 43049 / DSM 3752 / JCM 8966 / VKM B-1809) (Halobacterium marismortui) protein is Tritrans,polycis-undecaprenyl-diphosphate synthase (geranylgeranyl-diphosphate specific).